Here is a 64-residue protein sequence, read N- to C-terminus: Micrurotoxin 1 (64 aa).

5 cysteine pairs are disulfide-bonded: cysteine 3/cysteine 24, cysteine 6/cysteine 11, cysteine 17/cysteine 41, cysteine 45/cysteine 57, and cysteine 58/cysteine 63.

This sequence belongs to the three-finger toxin family. Ancestral subfamily. As to expression, expressed by the venom gland.

Its subcellular location is the secreted. In terms of biological role, allosteric modulator of the GABA(A) receptor (GABR), possibly increasing receptor affinity for the agonist, thus enhancing receptor opening and macroscopic desensitization. In vivo, intracerebroventricular injection into mice results in periods of reduced basal activity, followed by bursts of intense seizures and death. This chain is Micrurotoxin 1, found in Micrurus mipartitus (Red-tailed coral snake).